The sequence spans 93 residues: Small ribosomal subunit protein uS19 (93 aa).

Belongs to the universal ribosomal protein uS19 family.

Protein S19 forms a complex with S13 that binds strongly to the 16S ribosomal RNA. This chain is Small ribosomal subunit protein uS19, found in Latilactobacillus sakei subsp. sakei (strain 23K) (Lactobacillus sakei subsp. sakei).